The sequence spans 552 residues: Putative transport protein HAPS_0158 (552 aa).

5 helical membrane passes run 4–24 (IALT…IGHI), 28–48 (GVSL…HFMT), 65–85 (FGLI…FFAS), 95–115 (AFAV…HKIF), and 157–177 (MGYA…MWLI). RCK C-terminal domains lie at 193–275 (DSAT…ILGE) and 277–360 (VNVS…IIGN). The next 6 helical transmembrane spans lie at 370–390 (MLPI…PIYL), 393–413 (FPVA…LILA), 438–458 (IVLF…NTLL), 463–483 (LAWI…TGLV), 492–512 (YLSL…LAFA), and 532–552 (LVMF…WVAG).

The protein belongs to the AAE transporter (TC 2.A.81) family. YidE subfamily.

It localises to the cell membrane. This chain is Putative transport protein HAPS_0158, found in Glaesserella parasuis serovar 5 (strain SH0165) (Haemophilus parasuis).